Consider the following 204-residue polypeptide: Regulatory protein RecX (204 aa).

A compositionally biased stretch (polar residues) spans 1–22 (MTKSSRPQSISDSVSVAGSQGT). The segment at 1-44 (MTKSSRPQSISDSVSVAGSQGTLDDLRARVASVPEAPTREPVDS) is disordered.

It belongs to the RecX family.

It localises to the cytoplasm. Its function is as follows. Modulates RecA activity. In Mycobacteroides abscessus (strain ATCC 19977 / DSM 44196 / CCUG 20993 / CIP 104536 / JCM 13569 / NCTC 13031 / TMC 1543 / L948) (Mycobacterium abscessus), this protein is Regulatory protein RecX.